Reading from the N-terminus, the 109-residue chain is Putative small proline-rich protein 2J (109 aa).

Repeat copies occupy residues 21 to 29 (RSAQSPVLC), 30 to 38 (QSAPSLVLL), 39 to 47 (QSAQSPIHC), 48 to 56 (QSALSHAHL), and 57 to 65 (SHASRNALL). The tract at residues 21 to 65 (RSAQSPVLCQSAPSLVLLQSAQSPIHCQSALSHAHLSHASRNALL) is 5 X 9 AA approximate tandem repeats. The tract at residues 76-109 (AHPRANKGFSSLQNQKKRTESILHKSIATPPSSI) is disordered.

The protein belongs to the cornifin (SPRR) family. As to expression, not expressed in uterus.

It is found in the cytoplasm. Functionally, cross-linked envelope protein of keratinocytes. It is a keratinocyte protein that first appears in the cell cytosol, but ultimately becomes cross-linked to membrane proteins by transglutaminase. All that results in the formation of an insoluble envelope beneath the plasma membrane. The protein is Putative small proline-rich protein 2J (Sprr2j) of Mus musculus (Mouse).